The following is a 165-amino-acid chain: uncharacterized protein (165 aa).

Helical transmembrane passes span 6–26 (ILFP…SGQA), 28–48 (LFSG…AFVY), 54–74 (AVTP…HFFA), 78–98 (WVWW…SLLV), 110–130 (AVSM…MAWL), and 138–158 (ALLK…LLLI).

It localises to the cell membrane. This is an uncharacterized protein from Bacillus subtilis (strain 168).